The following is a 199-amino-acid chain: Guanylate kinase (199 aa).

The 180-residue stretch at 19–198 (VTVAVVSGPT…AVAHLVELLS (180 aa)) folds into the Guanylate kinase-like domain. 26–33 (GPTAVGKG) is an ATP binding site.

This sequence belongs to the guanylate kinase family.

The protein resides in the cytoplasm. It carries out the reaction GMP + ATP = GDP + ADP. Essential for recycling GMP and indirectly, cGMP. This is Guanylate kinase from Cutibacterium acnes (strain DSM 16379 / KPA171202) (Propionibacterium acnes).